Consider the following 346-residue polypeptide: Anthranilate phosphoribosyltransferase (346 aa).

5-phospho-alpha-D-ribose 1-diphosphate contacts are provided by residues glycine 88, 91 to 92 (GD), threonine 96, 98 to 101 (NIST), 116 to 124 (KHGNRAVSS), and alanine 128. Glycine 88 is an anthranilate binding site. Serine 100 is a Mg(2+) binding site. Asparagine 119 is an anthranilate binding site. Residue arginine 174 participates in anthranilate binding. 2 residues coordinate Mg(2+): aspartate 233 and glutamate 234.

This sequence belongs to the anthranilate phosphoribosyltransferase family. In terms of assembly, homodimer. The cofactor is Mg(2+).

It carries out the reaction N-(5-phospho-beta-D-ribosyl)anthranilate + diphosphate = 5-phospho-alpha-D-ribose 1-diphosphate + anthranilate. It functions in the pathway amino-acid biosynthesis; L-tryptophan biosynthesis; L-tryptophan from chorismate: step 2/5. In terms of biological role, catalyzes the transfer of the phosphoribosyl group of 5-phosphorylribose-1-pyrophosphate (PRPP) to anthranilate to yield N-(5'-phosphoribosyl)-anthranilate (PRA). This is Anthranilate phosphoribosyltransferase from Paramagnetospirillum magneticum (strain ATCC 700264 / AMB-1) (Magnetospirillum magneticum).